We begin with the raw amino-acid sequence, 339 residues long: MIAEADMEVCRELIRTGSYSFHAASRVLPARVRDPALALYAFCRVADDEVDEVGAPRDKAAAVLKLGDRLEDIYAGRPRNAPSDRAFAAVVEEFEMPRELPEALLEGFAWDAEGRWYHTLSDVQAYSARVAAAVGAMMCVLMRVRNPDALARACDLGLAMQMSNIARDVGEDARAGRLFLPTDWMVEEGIDPQAFLADPQPTKGIRRVTERLLNRADRLYWRAATGVRLLPFDCRPGIMAAGKIYAAIGAEVAKAKYDNITRRAHTTKGRKLWLVANSAMSATATSMLPLSPRVHAKPEPEVAHLVDAAAHRNLHPERSEVLISALMALKARDRGLAMD.

This sequence belongs to the phytoene/squalene synthase family. ATP is required as a cofactor. Mn(2+) serves as cofactor. The cofactor is Mg(2+).

It functions in the pathway carotenoid biosynthesis; phytoene biosynthesis. Its function is as follows. Involved in the biosynthesis of carotenoids. Catalyzes the condensation of two molecules of geranylgeranyl diphosphate (GGPP) to give prephytoene diphosphate (PPPP) and the subsequent rearrangement of the cyclopropylcarbinyl intermediate to yield phytoene. The polypeptide is Phytoene synthase (crtB) (Rhodobacter capsulatus (strain ATCC BAA-309 / NBRC 16581 / SB1003)).